The following is a 238-amino-acid chain: Epoxyqueuosine reductase QueH (238 aa).

Residues Cys43, Cys44, Cys129, and Cys132 each coordinate [4Fe-4S] cluster. Cysteines 211 and 213 form a disulfide.

Belongs to the QueH family.

It catalyses the reaction epoxyqueuosine(34) in tRNA + AH2 = queuosine(34) in tRNA + A + H2O. Its pathway is tRNA modification; tRNA-queuosine biosynthesis. Catalyzes the conversion of epoxyqueuosine (oQ) to queuosine (Q), which is a hypermodified base found in the wobble positions of tRNA(Asp), tRNA(Asn), tRNA(His) and tRNA(Tyr). The sequence is that of Epoxyqueuosine reductase QueH from Staphylococcus epidermidis (strain ATCC 12228 / FDA PCI 1200).